Reading from the N-terminus, the 348-residue chain is Nicotinate-nucleotide--dimethylbenzimidazole phosphoribosyltransferase (348 aa).

Catalysis depends on glutamate 316, which acts as the Proton acceptor.

This sequence belongs to the CobT family.

It carries out the reaction 5,6-dimethylbenzimidazole + nicotinate beta-D-ribonucleotide = alpha-ribazole 5'-phosphate + nicotinate + H(+). It functions in the pathway nucleoside biosynthesis; alpha-ribazole biosynthesis; alpha-ribazole from 5,6-dimethylbenzimidazole: step 1/2. Functionally, catalyzes the synthesis of alpha-ribazole-5'-phosphate from nicotinate mononucleotide (NAMN) and 5,6-dimethylbenzimidazole (DMB). This chain is Nicotinate-nucleotide--dimethylbenzimidazole phosphoribosyltransferase, found in Xanthomonas euvesicatoria pv. vesicatoria (strain 85-10) (Xanthomonas campestris pv. vesicatoria).